A 226-amino-acid chain; its full sequence is Acyl-homoserine-lactone synthase (226 aa).

This sequence belongs to the autoinducer synthase family.

The catalysed reaction is a fatty acyl-[ACP] + S-adenosyl-L-methionine = an N-acyl-L-homoserine lactone + S-methyl-5'-thioadenosine + holo-[ACP] + H(+). Its function is as follows. Required for the synthesis of OHHL (N-(3-oxohexanoyl)-L-homoserine lactone), an autoinducer molecule. This Pseudomonas amygdali pv. tabaci (Pseudomonas syringae pv. tabaci) protein is Acyl-homoserine-lactone synthase (psyI).